A 216-amino-acid polypeptide reads, in one-letter code: Pyridoxine/pyridoxamine 5'-phosphate oxidase (216 aa).

Substrate is bound by residues 12–15 and lysine 70; that span reads RREY. Residues 65–70, 80–81, arginine 86, lysine 87, and glutamine 109 contribute to the FMN site; these read RVVLLK and YT. Positions 127 and 131 each coordinate substrate. FMN contacts are provided by residues 144–145 and tryptophan 189; that span reads QS. 195–197 lines the substrate pocket; the sequence is RLH. Arginine 199 serves as a coordination point for FMN.

Belongs to the pyridoxamine 5'-phosphate oxidase family. Homodimer. It depends on FMN as a cofactor.

The catalysed reaction is pyridoxamine 5'-phosphate + O2 + H2O = pyridoxal 5'-phosphate + H2O2 + NH4(+). It carries out the reaction pyridoxine 5'-phosphate + O2 = pyridoxal 5'-phosphate + H2O2. It functions in the pathway cofactor metabolism; pyridoxal 5'-phosphate salvage; pyridoxal 5'-phosphate from pyridoxamine 5'-phosphate: step 1/1. Its pathway is cofactor metabolism; pyridoxal 5'-phosphate salvage; pyridoxal 5'-phosphate from pyridoxine 5'-phosphate: step 1/1. Its function is as follows. Catalyzes the oxidation of either pyridoxine 5'-phosphate (PNP) or pyridoxamine 5'-phosphate (PMP) into pyridoxal 5'-phosphate (PLP). The protein is Pyridoxine/pyridoxamine 5'-phosphate oxidase of Blochmanniella pennsylvanica (strain BPEN).